A 1030-amino-acid chain; its full sequence is uncharacterized protein (1030 aa).

The span at 1–15 (MSENSTDSKNFQFSE) shows a compositional bias: polar residues. Positions 1–53 (MSENSTDSKNFQFSEGSRESSNDELKVLLRDTETKEDEKSSFSNSEEESIIEN) are disordered. Positions 16–40 (GSRESSNDELKVLLRDTETKEDEKS) are enriched in basic and acidic residues. Phosphoserine is present on Ser41. The region spanning 134–290 (IKCVERMESV…WISEIHKQPC (157 aa)) is the Helicase ATP-binding domain. Residue 147-154 (AHTSAGKT) coordinates ATP. Residues 238-241 (DEVH) carry the DEVH box motif. Residues 357-561 (SLERIINMVL…GMILNLMRIE (205 aa)) enclose the Helicase C-terminal domain.

It belongs to the helicase family. SKI2 subfamily.

It localises to the nucleus. This is an uncharacterized protein from Schizosaccharomyces pombe (strain 972 / ATCC 24843) (Fission yeast).